A 29-amino-acid chain; its full sequence is Lambda-theraphotoxin-Ec2c (29 aa).

3 cysteine pairs are disulfide-bonded: Cys-2–Cys-16, Cys-9–Cys-21, and Cys-15–Cys-25.

This sequence belongs to the neurotoxin 30 (phrixotoxin) family. In terms of tissue distribution, expressed by the venom gland.

It is found in the secreted. In terms of biological role, both insecticidal and vertebrate neurotoxin that potently blocks insect calcium-activated potassium (BKCa) channels (Slo-type) in cockroach dorsal unpaired median (DUM) neurons (IC(50)=24.6 nM). This occurs in the absence of any shifts in the voltage dependence of activation. May interact with the turret and/or loop region of the external entrance to the channel and does not project deeply into the pore of the channel. Also shows toxicity to mice by introcerebroventicular injection. This is Lambda-theraphotoxin-Ec2c from Eucratoscelus constrictus (African red-rump baboon spider).